An 86-amino-acid chain; its full sequence is Kappa-theraphotoxin-Cg1a 4 (86 aa).

A signal peptide spans 1-21 (MKASVLITLAVLGVMFVWASA). Positions 22–50 (AELEERGSDQRDSPAWLKSMERIFQSEER) are excised as a propeptide. Disulfide bonds link C52–C66, C59–C71, and C65–C78. F84 carries the post-translational modification Phenylalanine amide.

Belongs to the neurotoxin 10 (Hwtx-1) family. 28 (Jztx-11) subfamily. In terms of tissue distribution, expressed by the venom gland.

Its subcellular location is the secreted. This toxin acts as a voltage-dependent gating-modifier. It inhibits the sodium conductance (IC(50)=124 nM) and slows the fast inactivation (EC(50)=1180 nM) of Nav1.5/SCN5A. It significantly shifts the activation to more depolarized voltages and decreases the deactivation of Nav1.5 currents upon extreme depolarization, but only slightly affects voltage-dependence of steady-state inactivation. In addition, this toxin causes an approximately five-fold decrease in the rate of recovery from inactivation and an approximately 1.9-fold reduction in the closed-state inactivation rate. This toxin integrates the functions of site 3 toxins (alpha-scorpion toxins) with site 4 toxins (beta-scorpion and spider toxins) by targeting multiple sites on Nav1.5. Also shows inhibition of voltage-gated potassium channels (5 uM completely inhibits Kv2.1/KCNB1, whereas 5 uM moderately inhibits Kv4.2/KCND2 Kv4.1/KCND1 channels). The chain is Kappa-theraphotoxin-Cg1a 4 from Chilobrachys guangxiensis (Chinese earth tiger tarantula).